Consider the following 423-residue polypeptide: Zinc finger protein Gfi-1 (423 aa).

The interval methionine 1–serine 20 is SNAG domain. The tract at residues methionine 1 to cysteine 76 is disordered. Residues serine 20 and serine 57 each carry the phosphoserine modification. The span at serine 48 to serine 57 shows a compositional bias: basic and acidic residues. A required for interaction with RELA region spans residues arginine 141 to cysteine 258. C2H2-type zinc fingers lie at residues tyrosine 256 to histidine 279, phenylalanine 285 to histidine 307, phenylalanine 313 to histidine 335, tyrosine 341 to histidine 363, histidine 369 to histidine 391, and phenylalanine 397 to histidine 420.

Interacts (via the zinc-finger domain) with ARIH2; the interaction prevents GFI1 ubiquitination and proteasomal degradation. Forms a complex with EHMT2 and HDAC1 to promote 'Lys-9' dimethylation of H3 (H3K9Me2) and repress expression of target genes. Interacts directly with EHMT2. Interacts with RUNX1T1; the interaction represses HDAC-mediated transcriptional activity. Interacts (via the C-terminal zinc fingers) with ZBTB17; the interaction results in the recruitment of GFI1 to the CDKN1A/p21 and CDKNIB promoters and repression of transcription. Interacts with U2AF1L4. Component of RCOR-GFI-KDM1A-HDAC complexes. Interacts directly with RCOR1, KDM1A and HDAC2. Also interacts with HDAC1. Component of the GFI1-AJUBA-HDAC1 repressor complex. Interacts directly with AJUBA (via its LIM domains); the interaction results in the HDAC-dependent corepression of a subset of GFI1 target genes and, occurs independently of the SNAG domain. Interacts with SPI1; the interaction inhibits SPI1 transcriptional activity targeted at macrophage-specific genes, repressing macrophage differentiation of myeloid progenitor cells and promoting granulocyte commitment. Interacts with PIAS3; the interaction relieves the inhibitory effect of PIAS3 on STAT3-mediated transcriptional activity. Interacts with RELA; the interaction occurs on liposaccharide (LPS) stimulation and controls RELA DNA binding activity and regulates endotoxin-mediated TOLL-like receptor inflammatory response. In terms of processing, ubiquitinated.

Its subcellular location is the nucleus. Transcription repressor essential for hematopoiesis. Functions in a cell-context and development-specific manner. Binds to 5'-TAAATCAC[AT]GCA-3' in the promoter region of a large number of genes. Component of several complexes, including the EHMT2-GFI1-HDAC1, AJUBA-GFI1-HDAC1 and RCOR-GFI-KDM1A-HDAC complexes, that suppress, via histone deacetylase (HDAC) recruitment, a number of genes implicated in multilineage blood cell development. Regulates neutrophil differentiation, promotes proliferation of lymphoid cells, and is required for granulocyte development. Inhibits SPI1 transcriptional activity at macrophage-specific genes, repressing macrophage differentiation of myeloid progenitor cells and promoting granulocyte commitment. Mediates, together with U2AF1L4, the alternative splicing of CD45 and controls T-cell receptor signaling. Regulates the endotoxin-mediated Toll-like receptor (TLR) inflammatory response by antagonizing RELA. Cooperates with CBFA2T2 to regulate ITGB1-dependent neurite growth. Controls cell-cycle progression by repressing CDKNIA/p21 transcription in response to TGFB1 via recruitment of GFI1 by ZBTB17 to the CDKNIA/p21 and CDKNIB promoters. Required for the maintenance of inner ear hair cells. In addition to its role in transcription, acts as a substrate adapter for PRMT1 in the DNA damage response. Facilitates the recognition of TP53BP1 and MRE11 substrates by PRMT1, promoting their methylation and the DNA damage response. This Mus musculus (Mouse) protein is Zinc finger protein Gfi-1 (Gfi1).